Reading from the N-terminus, the 342-residue chain is Dihydroorotase (342 aa).

Zn(2+)-binding residues include His13 and His15. Residues 15–17 and Asn41 contribute to the substrate site; that span reads HLR. Lys98, His135, and His173 together coordinate Zn(2+). An N6-carboxylysine modification is found at Lys98. Substrate is bound at residue His135. Leu218 provides a ligand contact to substrate. Asp246 lines the Zn(2+) pocket. Residue Asp246 is part of the active site. The substrate site is built by His250 and Ala262.

This sequence belongs to the metallo-dependent hydrolases superfamily. DHOase family. Class II DHOase subfamily. Homodimer. Zn(2+) serves as cofactor.

It catalyses the reaction (S)-dihydroorotate + H2O = N-carbamoyl-L-aspartate + H(+). It participates in pyrimidine metabolism; UMP biosynthesis via de novo pathway; (S)-dihydroorotate from bicarbonate: step 3/3. Its function is as follows. Catalyzes the reversible cyclization of carbamoyl aspartate to dihydroorotate. In Vibrio vulnificus (strain CMCP6), this protein is Dihydroorotase.